We begin with the raw amino-acid sequence, 261 residues long: Putative cytochrome YdhU (261 aa).

A helical transmembrane segment spans residues 25–45 (FWPVWLIIAGVLLVGMWLVLG). His77 serves as a coordination point for heme b. 3 consecutive transmembrane segments (helical) span residues 81 to 101 (ALLF…MVGA), 108 to 128 (VAVH…FVLI), and 182 to 202 (VAYV…GLLC). His111 contacts heme b. 2 residues coordinate heme b: His223 and His237. A helical transmembrane segment spans residues 224–244 (FALAFISLFFIFGHLYLCTTG). A menaquinone is bound at residue His237.

Belongs to the PhsC family. The cofactor is heme.

It localises to the cell inner membrane. The protein is Putative cytochrome YdhU (ydhU) of Escherichia coli (strain K12).